We begin with the raw amino-acid sequence, 655 residues long: Probable glucan endo-1,3-beta-glucosidase btgC (655 aa).

Disordered stretches follow at residues 1 to 61 (MSGD…ATPG) and 89 to 114 (SGVD…PGSD). The Cytoplasmic segment spans residues 1–282 (MSGDPRSFSF…PKPGTGSRKR (282 aa)). A compositionally biased stretch (polar residues) spans 19-33 (DSSQQPLHPTNTMAD). Basic and acidic residues predominate over residues 89–98 (SGVDAFRDTD). A helical; Signal-anchor for type II membrane protein transmembrane segment spans residues 283–303 (GWIVGIILAVVIVGAIVGGAV). Topologically, residues 304-655 (GGTLGNREKE…IPDCGGKTAT (352 aa)) are extracellular. Positions 305–338 (GTLGNREKESPSSSETASGDEKVNGDLGKDSDEI) are disordered. Residues 323-338 (GDEKVNGDLGKDSDEI) are compositionally biased toward basic and acidic residues. N-linked (GlcNAc...) asparagine glycosylation is present at N426. Residue E458 is the Proton donor of the active site. The active-site Nucleophile is the E557. N-linked (GlcNAc...) asparagine glycosylation is found at N576 and N602.

This sequence belongs to the glycosyl hydrolase 17 family.

The protein localises to the cell membrane. It catalyses the reaction Hydrolysis of (1-&gt;3)-beta-D-glucosidic linkages in (1-&gt;3)-beta-D-glucans.. Glucanases play a role in cell expansion during growth, in cell-cell fusion during mating, and in spore release during sporulation. This enzyme may be involved in beta-glucan degradation. Active on laminarin and lichenan. This is Probable glucan endo-1,3-beta-glucosidase btgC (btgC) from Aspergillus terreus (strain NIH 2624 / FGSC A1156).